The sequence spans 306 residues: Curved DNA-binding protein (306 aa).

The J domain maps to 5 to 69; that stretch reads DYYAIMGVKP…QRRAEYDQMW (65 aa).

It localises to the cytoplasm. Its subcellular location is the nucleoid. DNA-binding protein that preferentially recognizes a curved DNA sequence. It is probably a functional analog of DnaJ; displays overlapping activities with DnaJ, but functions under different conditions, probably acting as a molecular chaperone in an adaptive response to environmental stresses other than heat shock. Lacks autonomous chaperone activity; binds native substrates and targets them for recognition by DnaK. Its activity is inhibited by the binding of CbpM. The sequence is that of Curved DNA-binding protein from Escherichia fergusonii (strain ATCC 35469 / DSM 13698 / CCUG 18766 / IAM 14443 / JCM 21226 / LMG 7866 / NBRC 102419 / NCTC 12128 / CDC 0568-73).